The following is a 341-amino-acid chain: Phosphoribosylformylglycinamidine cyclo-ligase (341 aa).

This sequence belongs to the AIR synthase family.

It is found in the cytoplasm. It catalyses the reaction 2-formamido-N(1)-(5-O-phospho-beta-D-ribosyl)acetamidine + ATP = 5-amino-1-(5-phospho-beta-D-ribosyl)imidazole + ADP + phosphate + H(+). The protein operates within purine metabolism; IMP biosynthesis via de novo pathway; 5-amino-1-(5-phospho-D-ribosyl)imidazole from N(2)-formyl-N(1)-(5-phospho-D-ribosyl)glycinamide: step 2/2. In Picosynechococcus sp. (strain ATCC 27264 / PCC 7002 / PR-6) (Agmenellum quadruplicatum), this protein is Phosphoribosylformylglycinamidine cyclo-ligase.